Reading from the N-terminus, the 58-residue chain is MSEVKIGKNESLDAALRRFKRICQKSGVLSEARRREHYEKPSVRRKKKSEAARKRRWH.

A compositionally biased stretch (basic and acidic residues) spans 32–42; that stretch reads ARRREHYEKPS. The tract at residues 32–58 is disordered; that stretch reads ARRREHYEKPSVRRKKKSEAARKRRWH. Over residues 43–58 the composition is skewed to basic residues; it reads VRRKKKSEAARKRRWH.

Belongs to the bacterial ribosomal protein bS21 family.

The chain is Small ribosomal subunit protein bS21 from Moorella thermoacetica (strain ATCC 39073 / JCM 9320).